The following is a 773-amino-acid chain: Angiomotin-like protein 2 (773 aa).

Disordered stretches follow at residues Gly41–Ser157, Arg169–Phe238, and Gln259–Met309. Composition is skewed to basic and acidic residues over residues Gln80–Leu91, Lys100–Ala112, and Arg141–His152. A required for interaction with CDH5 region spans residues Gly101–Gly302. Tyr107 bears the Phosphotyrosine; by FGFR1 mark. Over residues His177–Ser190 the composition is skewed to polar residues. Positions Pro196–Tyr213 are enriched in pro residues. The interval Gln220 to Gly302 is required for interaction with CDH1. Residues Ala304–Gln577 are a coiled coil. Glycyl lysine isopeptide (Lys-Gly) (interchain with G-Cter in ubiquitin) cross-links involve residues Lys342 and Lys403. Disordered stretches follow at residues Gln589–Leu611 and Trp677–Leu754. The span at Glu701 to Pro710 shows a compositional bias: pro residues. Positions Asp719 to Cys734 are enriched in polar residues. Residues Ser753 and Ser756 each carry the phosphoserine modification. The PDZ-binding motif lies at Glu770–Ile773.

It belongs to the angiomotin family. In terms of assembly, part of a complex composed of AMOTL2, MAGI1 and CDH5, within the complex AMOTL2 acts as a scaffold protein for the interaction of MAGI1 with CDH5. The complex is required for coupling actin fibers to cell junctions in endothelial cells. Within the complex AMOTL2 (via its N-terminus) interacts with CDH5. Interacts (via N-terminus) with MAGI1. Interacts (via N-terminus) with ACTB; the interaction facilitates binding of cell junction complexes to actin fibers in endothelial cells. Interacts with CDH1; the interaction may facilitate binding of radial actin fibers to cell junction complexes. Interacts with SRC. Interacts with YAP1; the interaction is required for ubiquitination of AMOTL2 and localization of YAP1 to tight junctions. Interacts with WWP1; the interaction facilitates WWP1 interaction with the Crumbs complex and subsequent WWP1 translocation to the plasma membrane. WWP1 interaction with the Crumbs complex promotes WWP1 monoubiquitination of AMOTL2 which subsequently activates the Hippo signaling pathway. When ubiquitinated interacts with LATS2 (via UBA domain); the interaction promotes LATS2 phosphorylation of YAP1. Interacts (via PPXY motif) with WWTR1/TAZ (via WW domain); the interaction promotes WWTR1/TAZ localization to the cytoplasm and thereby inhibition of its transcriptional properties. Interacts with PHLDB2; interaction may facilitate PHLDB2 localization to the myotube podosome cortex that surrounds the core. In terms of processing, monoubiquitinated at Lys-342 and Lys-403 by Crumbs complex-bound WWP1. De-ubiquitinated at Lys-342 and Lys-403 by USP9X; the interaction may be promoted by cell contact inhibition. Deubiquitination of AMOTL2 negatively regulates Hippo signaling activation. Post-translationally, phosphorylation at Tyr-107 is necessary for efficient binding to SRC and synergistically functioning with SRC to activate the downstream MAPK pathway.

The protein resides in the recycling endosome. The protein localises to the cytoplasm. It is found in the cell projection. It localises to the podosome. Its subcellular location is the cell junction. In terms of biological role, regulates the translocation of phosphorylated SRC to peripheral cell-matrix adhesion sites. Required for proper architecture of actin filaments. Plays a role in coupling actin fibers to cell junctions in endothelial cells and is therefore required for correct endothelial cell morphology via facilitating transcellular transmission of mechanical force resulting in endothelial cell elongation. Required for the anchoring of radial actin fibers to CDH1 junction complexes at the cell membrane which facilitates organization of radial actin fiber structure and cellular response to contractile forces. This contributes to maintenance of cell area, size, shape, epithelial sheet organization and trophectoderm cell properties that facilitate blastocyst zona hatching. Inhibits the Wnt/beta-catenin signaling pathway, probably by recruiting CTNNB1 to recycling endosomes and hence preventing its translocation to the nucleus. Participates in angiogenesis. Activates the Hippo signaling pathway in response to cell contact inhibition via interaction with and ubiquitination by Crumbs complex-bound WWP1. Ubiquitinated AMOTL2 then interacts with LATS2 which in turn phosphorylates YAP1, excluding it from the nucleus and localizing it to the cytoplasm and tight junctions, therefore ultimately repressing YAP1-driven transcription of target genes. Acts to inhibit WWTR1/TAZ transcriptional coactivator activity via sequestering WWTR1/TAZ in the cytoplasm and at tight junctions. Regulates the size and protein composition of the podosome cortex and core at myofibril neuromuscular junctions. Selectively promotes FGF-induced MAPK activation through SRC. May play a role in the polarity, proliferation and migration of endothelial cells. The chain is Angiomotin-like protein 2 from Rattus norvegicus (Rat).